The chain runs to 378 residues: Chaperone protein DnaJ (378 aa).

Residues 5–69 enclose the J domain; it reads EYYDRLGVSK…QKRAAYDQYG (65 aa). The CR-type zinc-finger motif lies at 134-216; it reads GVEKEVSYNR…CHGTGHEKQA (83 aa). Zn(2+)-binding residues include Cys147, Cys150, Cys164, Cys167, Cys190, Cys193, Cys204, and Cys207. CXXCXGXG motif repeat units lie at residues 147–154, 164–171, 190–197, and 204–211; these read CGTCLGSG, CRKCHGSG, CDICHGSG, and CQTCHGTG.

Belongs to the DnaJ family. As to quaternary structure, homodimer. Zn(2+) serves as cofactor.

The protein resides in the cytoplasm. Functionally, participates actively in the response to hyperosmotic and heat shock by preventing the aggregation of stress-denatured proteins and by disaggregating proteins, also in an autonomous, DnaK-independent fashion. Unfolded proteins bind initially to DnaJ; upon interaction with the DnaJ-bound protein, DnaK hydrolyzes its bound ATP, resulting in the formation of a stable complex. GrpE releases ADP from DnaK; ATP binding to DnaK triggers the release of the substrate protein, thus completing the reaction cycle. Several rounds of ATP-dependent interactions between DnaJ, DnaK and GrpE are required for fully efficient folding. Also involved, together with DnaK and GrpE, in the DNA replication of plasmids through activation of initiation proteins. The polypeptide is Chaperone protein DnaJ (Streptococcus pyogenes serotype M1).